We begin with the raw amino-acid sequence, 366 residues long: Phenylalanine--tRNA ligase alpha subunit (366 aa).

Position 264 (Glu-264) interacts with Mg(2+).

This sequence belongs to the class-II aminoacyl-tRNA synthetase family. Phe-tRNA synthetase alpha subunit type 1 subfamily. Tetramer of two alpha and two beta subunits. The cofactor is Mg(2+).

Its subcellular location is the cytoplasm. The enzyme catalyses tRNA(Phe) + L-phenylalanine + ATP = L-phenylalanyl-tRNA(Phe) + AMP + diphosphate + H(+). The chain is Phenylalanine--tRNA ligase alpha subunit from Zymomonas mobilis subsp. mobilis (strain ATCC 31821 / ZM4 / CP4).